Here is a 611-residue protein sequence, read N- to C-terminus: MGDLARLPLLEKAPTTHAGLLAWVEEVAELTQPDRIHWVDGTEEEYTRLTGELVEAGTLTRLNPELFPNSFAAFSDPADVARVEEQTFICSENQRDAGFTNNWMAPAEMKQKLRGLFAGSMRGRTMYVIPFVMGHLDAEDPKFGVEITDSAYVVASMRIMANIGTEVLDKITATNAFFVPALHSLGAPLAPGQADVAWPCNPDKWIVHFPEERSIWSFGSGYGGNALLGKKCYALRIASVMARDEGWLAEHMLILKLTSPEKKSYYMSAAFPSACGKTNLALLDPTIEGWEVETLGDDITWMRIGKEGELRATNPEAGLFGVAPGTGWGTNPNAMRAIAKGHSIFTNVALTDDGGVWWEGMTEETPAHLTDWQGNSWTPDSDKPAAHPNSRFCTPISQIDMLAEEYYSPEGVELSAILFGGRRKTTVPLVTQARSWTNGIFMGSTLSSETTAAAAGQVGVLRRDPMAMLPFIGYDAGDYLKHWISVSGKANPERLPHIFLVNWFRRTADGDFAWPGFGDNARVLKWAIERIEGKADAIETPIGFVPAGHALDLTGLDLTHAHVEDAVRVDREEWDAELASIEEWYAKFGDSLPEALRAELDALKERMADHS.

Substrate is bound by residues arginine 82 and 222–224 (YGG). Lysine 231 and histidine 251 together coordinate Mn(2+). Serine 273 is a binding site for substrate. GTP is bound at residue 274–279 (ACGKTN). Residue cysteine 275 is part of the active site. Aspartate 298 is a Mn(2+) binding site. Substrate is bound at residue 389-391 (NSR). GTP contacts are provided by residues arginine 391, arginine 422, and 517 to 520 (FGDN).

This sequence belongs to the phosphoenolpyruvate carboxykinase [GTP] family. In terms of assembly, monomer. Mn(2+) is required as a cofactor.

The protein resides in the cytoplasm. The enzyme catalyses oxaloacetate + GTP = phosphoenolpyruvate + GDP + CO2. The protein operates within carbohydrate biosynthesis; gluconeogenesis. Catalyzes the conversion of oxaloacetate (OAA) to phosphoenolpyruvate (PEP), the rate-limiting step in the metabolic pathway that produces glucose from lactate and other precursors derived from the citric acid cycle. The polypeptide is Phosphoenolpyruvate carboxykinase [GTP] (Arthrobacter sp. (strain FB24)).